A 154-amino-acid polypeptide reads, in one-letter code: Snaclec agglucetin subunit alpha-1 (154 aa).

An N-terminal signal peptide occupies residues 1-23; sequence MGRFIFVSFGLLVVFLSLSGTGA. 3 disulfides stabilise this stretch: Cys27/Cys38, Cys55/Cys150, and Cys125/Cys142. The C-type lectin domain maps to 34-151; it reads YDQSCYRVFK…CGSEYAFVCK (118 aa). The N-linked (GlcNAc...) asparagine glycan is linked to Asn116.

It belongs to the snaclec family. In terms of assembly, heterotetramer of the subunits alpha-1, alpha-2, beta-1 and beta-2; disulfide-linked. As to expression, expressed by the venom gland.

The protein localises to the secreted. Functionally, agglucetin specifically causes platelet aggregation and surface exposure of integrin alpha-IIb/beta-3 with a GPIb-(GP1BA-) dependent manner in washed platelets. It binds to human platelets in a saturable manner, and its binding is specifically blocked by anti-GP Ib mAb. It regulates endothelial cell survival and promotes angiogenesis by activating integrin alpha-v/beta-3 signaling through FAK/phosphatidylinositol 3-kinase (PI3K)/Akt pathway. This chain is Snaclec agglucetin subunit alpha-1, found in Deinagkistrodon acutus (Hundred-pace snake).